The following is a 213-amino-acid chain: Eukaryotic translation initiation factor 4E (213 aa).

Residues 1 to 27 are disordered; the sequence is MAAVEPENTNPQSTEEEKETGQEIVSP. Residues 52–53, 98–99, 153–158, and 201–203 each bind mRNA; these read WQ, WE, RAKGDK, and TKS.

The protein belongs to the eukaryotic initiation factor 4E family. As to quaternary structure, eIF4F is a multi-subunit complex, the composition of which varies with external and internal environmental conditions. It is composed of at least eif4a, eif4e and eif4g. eif4e is also known to interact with other partners. tacc3/maskin competes with eif4g for binding to eif4e.

The protein localises to the cytoplasm. It is found in the nucleus. Recognizes and binds the 7-methylguanosine (m7G)-containing mRNA cap during an early step in the initiation of protein synthesis and facilitates ribosome binding by inducing the unwinding of the mRNAs secondary structures. In addition to its role in translation initiation, also acts as a regulator of translation and stability in the cytoplasm. Maternal RNA in oocytes remain in a dormant state as tacc3/maskin outcompetes eif4g to bind eif4e, thereby preventing translation. During oocyte maturation this complex dissolves and eif4g binds eif4e to allow translation of maternal RNAs. Also promotes export of a subset of mRNAs from the nucleus to the cytoplasm. The polypeptide is Eukaryotic translation initiation factor 4E (eif4e) (Xenopus laevis (African clawed frog)).